The following is a 99-amino-acid chain: Malonate decarboxylase acyl carrier protein (99 aa).

Ser25 is subject to O-(phosphoribosyl dephospho-coenzyme A)serine.

The protein belongs to the MdcC family. Covalently binds the prosthetic group of malonate decarboxylase.

It is found in the cytoplasm. Functionally, subunit of malonate decarboxylase, it is an acyl carrier protein to which acetyl and malonyl thioester residues are bound via a 2'-(5''-phosphoribosyl)-3'-dephospho-CoA prosthetic group and turn over during the catalytic mechanism. In Pseudomonas aeruginosa (strain UCBPP-PA14), this protein is Malonate decarboxylase acyl carrier protein.